Here is a 173-residue protein sequence, read N- to C-terminus: MNQTKSRDIPLYIYHAGQCDPKKCTGRKMARFELARLYDRISRLPRSAILLDPMAEKALSPADDPKKGIIVLDCSWEEVERVFPELEKLNLEHRALPYMLAGNPVNFGRPFKLNSAEAFAAALYILGYKEQAEKVMSKFNWGHSFLELNREPLEEYSTAKNSTEIVEIQSHYI.

S-adenosyl-L-methionine contacts are provided by Thr-25, Leu-72, Leu-96, and Ser-115.

This sequence belongs to the TDD superfamily. TSR3 family.

It is found in the cytoplasm. It carries out the reaction an N(1)-methylpseudouridine in rRNA + S-adenosyl-L-methionine = N(1)-methyl-N(3)-[(3S)-3-amino-3-carboxypropyl]pseudouridine in rRNA + S-methyl-5'-thioadenosine + H(+). Its function is as follows. Aminocarboxypropyltransferase that catalyzes the aminocarboxypropyl transfer on pseudouridine corresponding to position 914 in M.jannaschii 16S rRNA. It constitutes the last step in biosynthesis of the hypermodified N1-methyl-N3-(3-amino-3-carboxypropyl) pseudouridine (m1acp3-Psi). This Methanosarcina mazei (strain ATCC BAA-159 / DSM 3647 / Goe1 / Go1 / JCM 11833 / OCM 88) (Methanosarcina frisia) protein is 16S rRNA aminocarboxypropyltransferase.